A 427-amino-acid chain; its full sequence is Serine--tRNA ligase (427 aa).

235–237 (TAE) contributes to the L-serine binding site. ATP is bound by residues 266-268 (RRE) and V282. Residue E289 coordinates L-serine. Position 353–356 (353–356 (EASS)) interacts with ATP. Position 389 (S389) interacts with L-serine.

This sequence belongs to the class-II aminoacyl-tRNA synthetase family. Type-1 seryl-tRNA synthetase subfamily. Homodimer. The tRNA molecule binds across the dimer.

Its subcellular location is the cytoplasm. The catalysed reaction is tRNA(Ser) + L-serine + ATP = L-seryl-tRNA(Ser) + AMP + diphosphate + H(+). The enzyme catalyses tRNA(Sec) + L-serine + ATP = L-seryl-tRNA(Sec) + AMP + diphosphate + H(+). It participates in aminoacyl-tRNA biosynthesis; selenocysteinyl-tRNA(Sec) biosynthesis; L-seryl-tRNA(Sec) from L-serine and tRNA(Sec): step 1/1. Catalyzes the attachment of serine to tRNA(Ser). Is also able to aminoacylate tRNA(Sec) with serine, to form the misacylated tRNA L-seryl-tRNA(Sec), which will be further converted into selenocysteinyl-tRNA(Sec). The polypeptide is Serine--tRNA ligase (Chloroherpeton thalassium (strain ATCC 35110 / GB-78)).